We begin with the raw amino-acid sequence, 51 residues long: Sperm protamine P1 (51 aa).

This sequence belongs to the protamine P1 family. Testis.

The protein resides in the nucleus. It localises to the chromosome. Protamines substitute for histones in the chromatin of sperm during the haploid phase of spermatogenesis. They compact sperm DNA into a highly condensed, stable and inactive complex. The protein is Sperm protamine P1 (PRM1) of Colobus guereza (Mantled guereza).